We begin with the raw amino-acid sequence, 179 residues long: Large ribosomal subunit protein uL6 (179 aa).

It belongs to the universal ribosomal protein uL6 family. In terms of assembly, part of the 50S ribosomal subunit.

Its function is as follows. This protein binds to the 23S rRNA, and is important in its secondary structure. It is located near the subunit interface in the base of the L7/L12 stalk, and near the tRNA binding site of the peptidyltransferase center. This chain is Large ribosomal subunit protein uL6, found in Mycobacterium ulcerans (strain Agy99).